A 400-amino-acid polypeptide reads, in one-letter code: Acetate kinase (400 aa).

Residue asparagine 10 coordinates Mg(2+). Lysine 17 contributes to the ATP binding site. Residue arginine 91 participates in substrate binding. Aspartate 150 functions as the Proton donor/acceptor in the catalytic mechanism. Residues 210–214 (HLGNG), 285–287 (DCR), and 333–337 (GIGEN) each bind ATP. Mg(2+) is bound at residue glutamate 387.

Belongs to the acetokinase family. As to quaternary structure, homodimer. The cofactor is Mg(2+). Requires Mn(2+) as cofactor.

Its subcellular location is the cytoplasm. It carries out the reaction acetate + ATP = acetyl phosphate + ADP. The protein operates within metabolic intermediate biosynthesis; acetyl-CoA biosynthesis; acetyl-CoA from acetate: step 1/2. Its function is as follows. Catalyzes the formation of acetyl phosphate from acetate and ATP. Can also catalyze the reverse reaction. The protein is Acetate kinase of Yersinia pseudotuberculosis serotype I (strain IP32953).